We begin with the raw amino-acid sequence, 279 residues long: Thymidylate synthase (279 aa).

Residue 141–142 coordinates dUMP; it reads RR. Catalysis depends on cysteine 161, which acts as the Nucleophile. DUMP-binding positions include 181–184, asparagine 192, and 222–224; these read RSND and HVY. A (6R)-5,10-methylene-5,6,7,8-tetrahydrofolate-binding site is contributed by aspartate 184. Alanine 278 provides a ligand contact to (6R)-5,10-methylene-5,6,7,8-tetrahydrofolate.

The protein belongs to the thymidylate synthase family. Bacterial-type ThyA subfamily. Homodimer.

The protein resides in the cytoplasm. The catalysed reaction is dUMP + (6R)-5,10-methylene-5,6,7,8-tetrahydrofolate = 7,8-dihydrofolate + dTMP. It participates in pyrimidine metabolism; dTTP biosynthesis. Functionally, catalyzes the reductive methylation of 2'-deoxyuridine-5'-monophosphate (dUMP) to 2'-deoxythymidine-5'-monophosphate (dTMP) while utilizing 5,10-methylenetetrahydrofolate (mTHF) as the methyl donor and reductant in the reaction, yielding dihydrofolate (DHF) as a by-product. This enzymatic reaction provides an intracellular de novo source of dTMP, an essential precursor for DNA biosynthesis. The protein is Thymidylate synthase of Bacillus subtilis subsp. natto.